Consider the following 300-residue polypeptide: Mycothiol acetyltransferase (300 aa).

2 consecutive N-acetyltransferase domains span residues 4-140 (IDWR…RPLT) and 151-300 (VRLA…AVAD). Asp36 serves as a coordination point for 1D-myo-inositol 2-(L-cysteinylamino)-2-deoxy-alpha-D-glucopyranoside. Position 79-81 (79-81 (LVV)) interacts with acetyl-CoA. Residues Glu178, Lys219, and Glu227 each coordinate 1D-myo-inositol 2-(L-cysteinylamino)-2-deoxy-alpha-D-glucopyranoside. Position 231-233 (231-233 (VGV)) interacts with acetyl-CoA. Tyr269 serves as a coordination point for 1D-myo-inositol 2-(L-cysteinylamino)-2-deoxy-alpha-D-glucopyranoside. 274 to 279 (NGAAVK) serves as a coordination point for acetyl-CoA.

Belongs to the acetyltransferase family. MshD subfamily. As to quaternary structure, monomer.

The enzyme catalyses 1D-myo-inositol 2-(L-cysteinylamino)-2-deoxy-alpha-D-glucopyranoside + acetyl-CoA = mycothiol + CoA + H(+). In terms of biological role, catalyzes the transfer of acetyl from acetyl-CoA to desacetylmycothiol (Cys-GlcN-Ins) to form mycothiol. The protein is Mycothiol acetyltransferase of Mycobacterium sp. (strain JLS).